We begin with the raw amino-acid sequence, 277 residues long: 2-dehydro-3-deoxyphosphooctonate aldolase (277 aa).

The protein belongs to the KdsA family.

It localises to the cytoplasm. The enzyme catalyses D-arabinose 5-phosphate + phosphoenolpyruvate + H2O = 3-deoxy-alpha-D-manno-2-octulosonate-8-phosphate + phosphate. It functions in the pathway carbohydrate biosynthesis; 3-deoxy-D-manno-octulosonate biosynthesis; 3-deoxy-D-manno-octulosonate from D-ribulose 5-phosphate: step 2/3. The protein operates within bacterial outer membrane biogenesis; lipopolysaccharide biosynthesis. This is 2-dehydro-3-deoxyphosphooctonate aldolase from Brucella melitensis biotype 2 (strain ATCC 23457).